A 178-amino-acid polypeptide reads, in one-letter code: ATP synthase subunit delta (178 aa).

The protein belongs to the ATPase delta chain family. In terms of assembly, F-type ATPases have 2 components, F(1) - the catalytic core - and F(0) - the membrane proton channel. F(1) has five subunits: alpha(3), beta(3), gamma(1), delta(1), epsilon(1). F(0) has three main subunits: a(1), b(2) and c(10-14). The alpha and beta chains form an alternating ring which encloses part of the gamma chain. F(1) is attached to F(0) by a central stalk formed by the gamma and epsilon chains, while a peripheral stalk is formed by the delta and b chains.

Its subcellular location is the cell membrane. F(1)F(0) ATP synthase produces ATP from ADP in the presence of a proton or sodium gradient. F-type ATPases consist of two structural domains, F(1) containing the extramembraneous catalytic core and F(0) containing the membrane proton channel, linked together by a central stalk and a peripheral stalk. During catalysis, ATP synthesis in the catalytic domain of F(1) is coupled via a rotary mechanism of the central stalk subunits to proton translocation. Functionally, this protein is part of the stalk that links CF(0) to CF(1). It either transmits conformational changes from CF(0) to CF(1) or is implicated in proton conduction. The protein is ATP synthase subunit delta of Streptococcus agalactiae serotype V (strain ATCC BAA-611 / 2603 V/R).